Reading from the N-terminus, the 414-residue chain is Enterobactin exporter EntS (414 aa).

Residues 1–21 (MNRQSWLLNLSLLKTHPAFRA) are Cytoplasmic-facing. A helical transmembrane segment spans residues 22-42 (VFLARFISIVSLGLLGVAVPV). At 43 to 55 (QIQMMTHSTWQVG) the chain is on the periplasmic side. The helical transmembrane segment at 56–76 (LSVTLTGGAMFIGLMVGGVLA) threads the bilayer. Residues 77–83 (DRYERKK) lie on the Cytoplasmic side of the membrane. The helical transmembrane segment at 84-104 (VILLARGTCGIGFIGLCVNAL) threads the bilayer. At 105–109 (LPEPS) the chain is on the periplasmic side. A helical transmembrane segment spans residues 110–130 (LLAIYLLGLWDGFFASLGVTA). At 131-156 (LLAATPALVGRENLMQAGAITMLTVR) the chain is on the cytoplasmic side. Residues 157 to 177 (LGSVISPMLGGILLASGGVAW) traverse the membrane as a helical segment. Position 178 (Asn-178) is a topological domain, periplasmic. A helical membrane pass occupies residues 179-199 (YGLAAAGTFITLLPLLTLPRL). At 200–218 (PVPPQPRENPFLALLAAFR) the chain is on the cytoplasmic side. Residues 219-239 (FLLACPLIGGIALLGGLVTMA) form a helical membrane-spanning segment. Topologically, residues 240–256 (SAVRVLYPALAMSWQMS) are periplasmic. A helical membrane pass occupies residues 257–277 (AAQIGLLYAAIPLGAAIGALT). The Cytoplasmic portion of the chain corresponds to 278–287 (SGQLAHSVRP). Residues 288-307 (GLIMLVSTVGSFLAVGLFAI) traverse the membrane as a helical segment. At 308–313 (MPVWIA) the chain is on the periplasmic side. A helical membrane pass occupies residues 314–336 (GVICLALFGWLSAISSLLQYTLL). Residues 337–356 (QTQTPENMLGRMNGLWTAQN) are Cytoplasmic-facing. Residues 357–377 (VTGDAIGAALLGGLGAMMTPV) form a helical membrane-spanning segment. Residue Ala-378 is a topological domain, periplasmic. A helical transmembrane segment spans residues 379–399 (SASVSGFGLVIIGLLLLLVLG). Topologically, residues 400–414 (ELRRFRQTSPVSDAG) are cytoplasmic.

This sequence belongs to the major facilitator superfamily. EntS (TC 2.A.1.38) family.

It is found in the cell inner membrane. In terms of biological role, component of an export pathway for enterobactin. The chain is Enterobactin exporter EntS from Salmonella paratyphi A (strain ATCC 9150 / SARB42).